Here is a 273-residue protein sequence, read N- to C-terminus: Large ribosomal subunit protein uL2 (273 aa).

The disordered stretch occupies residues 221–263 (RGTAMNPVDHPHGGGEGRNFGKHPVTPWGVQTKGKKTRHNKRT). Residues 253–263 (KGKKTRHNKRT) show a composition bias toward basic residues.

It belongs to the universal ribosomal protein uL2 family. In terms of assembly, part of the 50S ribosomal subunit. Forms a bridge to the 30S subunit in the 70S ribosome.

Functionally, one of the primary rRNA binding proteins. Required for association of the 30S and 50S subunits to form the 70S ribosome, for tRNA binding and peptide bond formation. It has been suggested to have peptidyltransferase activity; this is somewhat controversial. Makes several contacts with the 16S rRNA in the 70S ribosome. This is Large ribosomal subunit protein uL2 from Histophilus somni (strain 2336) (Haemophilus somnus).